A 426-amino-acid polypeptide reads, in one-letter code: Serine--tRNA ligase (426 aa).

Position 230-232 (230-232 (TAE)) interacts with L-serine. Position 261 to 263 (261 to 263 (RSE)) interacts with ATP. Glu-284 is an L-serine binding site. 348 to 351 (EISS) is an ATP binding site. Ser-384 lines the L-serine pocket.

This sequence belongs to the class-II aminoacyl-tRNA synthetase family. Type-1 seryl-tRNA synthetase subfamily. Homodimer. The tRNA molecule binds across the dimer.

It is found in the cytoplasm. It catalyses the reaction tRNA(Ser) + L-serine + ATP = L-seryl-tRNA(Ser) + AMP + diphosphate + H(+). The catalysed reaction is tRNA(Sec) + L-serine + ATP = L-seryl-tRNA(Sec) + AMP + diphosphate + H(+). Its pathway is aminoacyl-tRNA biosynthesis; selenocysteinyl-tRNA(Sec) biosynthesis; L-seryl-tRNA(Sec) from L-serine and tRNA(Sec): step 1/1. Its function is as follows. Catalyzes the attachment of serine to tRNA(Ser). Is also able to aminoacylate tRNA(Sec) with serine, to form the misacylated tRNA L-seryl-tRNA(Sec), which will be further converted into selenocysteinyl-tRNA(Sec). The protein is Serine--tRNA ligase of Phenylobacterium zucineum (strain HLK1).